A 251-amino-acid chain; its full sequence is Mast cell protease 3 (251 aa).

An N-terminal signal peptide occupies residues Met-1–Ala-17. A propeptide spans Gly-18 to Lys-19 (activation peptide). One can recognise a Peptidase S1 domain in the interval Ile-20–Arg-243. An intrachain disulfide couples Cys-48 to Cys-64. Residue His-63 is the Charge relay system of the active site. A glycan (N-linked (GlcNAc...) asparagine) is linked at Asn-70. The active-site Charge relay system is Asp-107. Disulfide bonds link Cys-141–Cys-207 and Cys-172–Cys-186. The active-site Charge relay system is the Ser-201.

It belongs to the peptidase S1 family. Granzyme subfamily.

It is found in the secreted. It localises to the cytoplasmic granule. This chain is Mast cell protease 3, found in Ovis aries (Sheep).